Here is a 743-residue protein sequence, read N- to C-terminus: Phenylalanine ammonia-lyase 1 (743 aa).

Tyrosine 120 functions as the Proton donor/acceptor in the catalytic mechanism. Residues 224-226 (ASG) constitute a cross-link (5-imidazolinone (Ala-Gly)). Serine 225 bears the 2,3-didehydroalanine (Ser) mark. Positions 287, 377, 383, 413, 484, 512, and 515 each coordinate (E)-cinnamate.

The protein belongs to the PAL/histidase family. Homotetramer. Contains an active site 4-methylidene-imidazol-5-one (MIO), which is formed autocatalytically by cyclization and dehydration of residues Ala-Ser-Gly.

Its subcellular location is the cytoplasm. The enzyme catalyses L-phenylalanine = (E)-cinnamate + NH4(+). It participates in phenylpropanoid metabolism; trans-cinnamate biosynthesis; trans-cinnamate from L-phenylalanine: step 1/1. Its function is as follows. Catalyzes the non-oxidative deamination of L-phenylalanine to form trans-cinnamic acid and a free ammonium ion. Facilitates the commitment step in phenylpropanoid pathways that produce secondary metabolites such as lignins, coumarins and flavonoids. This Pleurotus ostreatus (Oyster mushroom) protein is Phenylalanine ammonia-lyase 1.